The primary structure comprises 348 residues: Dihydroorotase (348 aa).

The Zn(2+) site is built by histidine 17 and histidine 19. Substrate-binding positions include 19 to 21 and asparagine 45; that span reads HLR. Zn(2+) contacts are provided by lysine 103, histidine 140, and histidine 178. Lysine 103 carries the post-translational modification N6-carboxylysine. A substrate-binding site is contributed by histidine 140. Leucine 223 serves as a coordination point for substrate. A Zn(2+)-binding site is contributed by aspartate 251. Aspartate 251 is an active-site residue. 2 residues coordinate substrate: histidine 255 and alanine 267.

This sequence belongs to the metallo-dependent hydrolases superfamily. DHOase family. Class II DHOase subfamily. In terms of assembly, homodimer. Zn(2+) is required as a cofactor.

The catalysed reaction is (S)-dihydroorotate + H2O = N-carbamoyl-L-aspartate + H(+). The protein operates within pyrimidine metabolism; UMP biosynthesis via de novo pathway; (S)-dihydroorotate from bicarbonate: step 3/3. In terms of biological role, catalyzes the reversible cyclization of carbamoyl aspartate to dihydroorotate. This chain is Dihydroorotase, found in Cronobacter sakazakii (strain ATCC BAA-894) (Enterobacter sakazakii).